The primary structure comprises 472 residues: Transcriptional activator protein rec16 (472 aa).

The C2H2-type zinc finger occupies 420–444 (FICCYCTKPFLSISKLQEHESSCSH).

Its subcellular location is the nucleus. Its function is as follows. Transcriptional activator that controls the onset of premeiotic DNA synthesis by regulating res2 and some other factor(s) in a mei2 independent cascade. This is Transcriptional activator protein rec16 (rec16) from Schizosaccharomyces pombe (strain 972 / ATCC 24843) (Fission yeast).